Here is a 154-residue protein sequence, read N- to C-terminus: uncharacterized protein (154 aa).

Residues 1-33 form the signal peptide; sequence MTKRGIQAFAGGIILATAVLAAVFYLTDEDQAA.

This is an uncharacterized protein from Bacillus subtilis (strain 168).